A 372-amino-acid chain; its full sequence is 4-hydroxy-3-methylbut-2-en-1-yl diphosphate synthase (flavodoxin) (372 aa).

Residues cysteine 270, cysteine 273, cysteine 305, and glutamate 312 each contribute to the [4Fe-4S] cluster site.

The protein belongs to the IspG family. The cofactor is [4Fe-4S] cluster.

The catalysed reaction is (2E)-4-hydroxy-3-methylbut-2-enyl diphosphate + oxidized [flavodoxin] + H2O + 2 H(+) = 2-C-methyl-D-erythritol 2,4-cyclic diphosphate + reduced [flavodoxin]. The protein operates within isoprenoid biosynthesis; isopentenyl diphosphate biosynthesis via DXP pathway; isopentenyl diphosphate from 1-deoxy-D-xylulose 5-phosphate: step 5/6. Functionally, converts 2C-methyl-D-erythritol 2,4-cyclodiphosphate (ME-2,4cPP) into 1-hydroxy-2-methyl-2-(E)-butenyl 4-diphosphate. The polypeptide is 4-hydroxy-3-methylbut-2-en-1-yl diphosphate synthase (flavodoxin) (Pseudoalteromonas translucida (strain TAC 125)).